A 270-amino-acid polypeptide reads, in one-letter code: Formamidopyrimidine-DNA glycosylase (270 aa).

Pro2 serves as the catalytic Schiff-base intermediate with DNA. Glu3 acts as the Proton donor in catalysis. Lys59 acts as the Proton donor; for beta-elimination activity in catalysis. DNA-binding residues include His91, Arg110, and Lys151. The FPG-type zinc-finger motif lies at 236 to 270; that stretch reads RVYGRDKEPCVTCGQQVKSKVLGGRNTFWCSRCQK. Arg260 serves as the catalytic Proton donor; for delta-elimination activity.

The protein belongs to the FPG family. Monomer. The cofactor is Zn(2+).

It catalyses the reaction Hydrolysis of DNA containing ring-opened 7-methylguanine residues, releasing 2,6-diamino-4-hydroxy-5-(N-methyl)formamidopyrimidine.. It carries out the reaction 2'-deoxyribonucleotide-(2'-deoxyribose 5'-phosphate)-2'-deoxyribonucleotide-DNA = a 3'-end 2'-deoxyribonucleotide-(2,3-dehydro-2,3-deoxyribose 5'-phosphate)-DNA + a 5'-end 5'-phospho-2'-deoxyribonucleoside-DNA + H(+). Functionally, involved in base excision repair of DNA damaged by oxidation or by mutagenic agents. Acts as a DNA glycosylase that recognizes and removes damaged bases. Has a preference for oxidized purines, such as 7,8-dihydro-8-oxoguanine (8-oxoG). Has AP (apurinic/apyrimidinic) lyase activity and introduces nicks in the DNA strand. Cleaves the DNA backbone by beta-delta elimination to generate a single-strand break at the site of the removed base with both 3'- and 5'-phosphates. The chain is Formamidopyrimidine-DNA glycosylase from Bdellovibrio bacteriovorus (strain ATCC 15356 / DSM 50701 / NCIMB 9529 / HD100).